The primary structure comprises 397 residues: MDFLAKSINQFALEFSKKLAESAEGKNIFFSPWGISASLAMVYLGTKGTTAAQMAQVLQFSRDQDSKFCPDSEKKRKMEFNVGKPEEIYSDFQTLISEINSSSHACILKTANRIYGEKTFPFHKKYLEDVKTYFGAEPQSVNFIGASDQIRKEINSWVEKQTEGKILNLLPDDAVDPTTRMVLVNALYFKGVWEHQFLVQNTTEKSFKINKTTSKPVQMMSMKEKLQVFYIESPQAMGLQLYYESRDLSLLILLPEDVDGLDQLEKTITYEKLSEWTSADMMELCNVQLNLPKFKLEETYDLKSTLSSMGMSDAFNQSKADFSGMSSERNLFLSNVFHKCFVEINEQGTEAAAGTGSEVSVRMKLPSIEFNADHPFLFFIRHNKTNGILFYGRFCSP.

The short motif at 74 to 77 is the Nuclear localization signal element; the sequence is KKRK.

Belongs to the serpin family. Ov-serpin subfamily.

It is found in the nucleus. Its subcellular location is the cytoplasm. Its function is as follows. Protease inhibitor that may play a role in the regulation of protease activities during hematopoiesis and apoptosis induced by TNF. May regulate protease activities in the cytoplasm and in the nucleus. The polypeptide is Serpin B10 (SERPINB10) (Bos taurus (Bovine)).